The sequence spans 366 residues: Terpene synthase 4 (366 aa).

The short motif at 91–96 (DDFLER) is the DDxx(x)D/E motif element. The short motif at 241 to 249 (NDCVSYAKE) is the NDxxSxxxD/E motif element.

Belongs to the terpene synthase family.

It catalyses the reaction (2E,6E)-farnesyl diphosphate = (1S,2S,4R)-beta-elemene + diphosphate. Its function is as follows. Terpene synthase that converts its substrate farnesyl diphosphate (FPP) into the sesquiterpenes bicycloelemene, beta-elemene and 2 yet unidentified sesquiterpenes. The chain is Terpene synthase 4 from Dictyostelium purpureum (Slime mold).